The sequence spans 444 residues: ATP-dependent protease ATPase subunit HslU (444 aa).

ATP contacts are provided by residues Ile18 and 60 to 65 (GVGKTE). The segment at 141–161 (DAWGNNEEGDNDSGTRQSFRK) is disordered. The ATP site is built by Asp257, Glu322, and Arg394.

The protein belongs to the ClpX chaperone family. HslU subfamily. A double ring-shaped homohexamer of HslV is capped on each side by a ring-shaped HslU homohexamer. The assembly of the HslU/HslV complex is dependent on binding of ATP.

It localises to the cytoplasm. In terms of biological role, ATPase subunit of a proteasome-like degradation complex; this subunit has chaperone activity. The binding of ATP and its subsequent hydrolysis by HslU are essential for unfolding of protein substrates subsequently hydrolyzed by HslV. HslU recognizes the N-terminal part of its protein substrates and unfolds these before they are guided to HslV for hydrolysis. The protein is ATP-dependent protease ATPase subunit HslU of Aliivibrio fischeri (strain MJ11) (Vibrio fischeri).